The sequence spans 127 residues: Modulator protein MzrA (127 aa).

Residues 1-9 (MQLPRVTLR) are Cytoplasmic-facing. Residues 10 to 32 (QMTWTTSAIVLLGITLLLWSAFR) traverse the membrane as a helical segment. Over 33-127 (HQESTLAIRA…LLRDTSHRFG (95 aa)) the chain is Periplasmic.

Belongs to the MzrA family. In terms of assembly, interacts with EnvZ.

The protein localises to the cell inner membrane. Its function is as follows. Modulates the activity of the EnvZ/OmpR two-component regulatory system, probably by directly modulating EnvZ enzymatic activity and increasing stability of phosphorylated OmpR. This chain is Modulator protein MzrA, found in Escherichia fergusonii (strain ATCC 35469 / DSM 13698 / CCUG 18766 / IAM 14443 / JCM 21226 / LMG 7866 / NBRC 102419 / NCTC 12128 / CDC 0568-73).